We begin with the raw amino-acid sequence, 352 residues long: Secreted RxLR effector protein 122 (352 aa).

The signal sequence occupies residues 1 to 21 (MRGAYYVLIALLVVASSQTSA). The RxLR-dEER motif lies at 48–65 (QFLRGSRNVPGDLAHEER). The span at 280 to 290 (RGGTTGASRGT) shows a compositional bias: low complexity. The disordered stretch occupies residues 280–352 (RGGTTGASRG…VEPEGHRSKP (73 aa)). Residues 302–315 (AASTSKGKSSVFTE) are compositionally biased toward polar residues.

The protein belongs to the RxLR effector family.

It is found in the secreted. The protein resides in the host nucleus. Secreted effector that acts as an elicitor that induces cell death in host plant cells. The chain is Secreted RxLR effector protein 122 from Plasmopara viticola (Downy mildew of grapevine).